The sequence spans 1486 residues: Chromosome partition protein MukB (1486 aa).

Residue 34–41 participates in ATP binding; that stretch reads GGNGAGKS. Coiled coils occupy residues 326 to 418, 444 to 480, and 509 to 603; these read LEAD…QYNQ, LETF…QAYQ, and RHLA…RAPV. The segment at 666–783 is flexible hinge; sequence PGGSEDQRLN…EVPLFGRAAR (118 aa). Coiled-coil stretches lie at residues 835–923, 977–1115, and 1209–1266; these read EAEI…AKLE, EMLS…TAKA, and VEAI…QNVS.

This sequence belongs to the SMC family. MukB subfamily. As to quaternary structure, homodimerization via its hinge domain. Binds to DNA via its C-terminal region. Interacts, and probably forms a ternary complex, with MukE and MukF via its C-terminal region. The complex formation is stimulated by calcium or magnesium. Interacts with tubulin-related protein FtsZ.

It is found in the cytoplasm. Its subcellular location is the nucleoid. Functionally, plays a central role in chromosome condensation, segregation and cell cycle progression. Functions as a homodimer, which is essential for chromosome partition. Involved in negative DNA supercoiling in vivo, and by this means organize and compact chromosomes. May achieve or facilitate chromosome segregation by condensation DNA from both sides of a centrally located replisome during cell division. This Escherichia coli O157:H7 protein is Chromosome partition protein MukB.